Reading from the N-terminus, the 317-residue chain is Small glutamine-rich tetratricopeptide repeat-containing protein 2 (317 aa).

TPR repeat units follow at residues 14 to 48 (LKQA…KPEE), 83 to 116 (AEKL…DPTS), 118 to 150 (VYYS…DPHH), and 151 to 184 (ARAF…DPNN). Over residues 198 to 215 (LNQPSDSSATSGADQART) the composition is skewed to polar residues. Disordered regions lie at residues 198 to 224 (LNQP…PDLG) and 298 to 317 (MNNN…PPPQ).

The protein belongs to the SGT family.

The protein localises to the cytoplasm. Its subcellular location is the nucleus. Co-chaperone that binds to the molecular chaperone Hsp70 and regulates Hsp70 ATPase activity. This chain is Small glutamine-rich tetratricopeptide repeat-containing protein 2 (sgt2), found in Schizosaccharomyces pombe (strain 972 / ATCC 24843) (Fission yeast).